The sequence spans 248 residues: Phosphatidylglycerol--prolipoprotein diacylglyceryl transferase (248 aa).

A run of 3 helical transmembrane segments spans residues Phe-6–Leu-26, Ile-48–Glu-68, and Gly-84–Cys-104. Residue Arg-130 coordinates a 1,2-diacyl-sn-glycero-3-phospho-(1'-sn-glycerol). A run of 2 helical transmembrane segments spans residues Gly-187–Leu-207 and Ile-214–Leu-234.

It belongs to the Lgt family.

The protein localises to the cell membrane. It carries out the reaction L-cysteinyl-[prolipoprotein] + a 1,2-diacyl-sn-glycero-3-phospho-(1'-sn-glycerol) = an S-1,2-diacyl-sn-glyceryl-L-cysteinyl-[prolipoprotein] + sn-glycerol 1-phosphate + H(+). It participates in protein modification; lipoprotein biosynthesis (diacylglyceryl transfer). In terms of biological role, catalyzes the transfer of the diacylglyceryl group from phosphatidylglycerol to the sulfhydryl group of the N-terminal cysteine of a prolipoprotein, the first step in the formation of mature lipoproteins. The chain is Phosphatidylglycerol--prolipoprotein diacylglyceryl transferase from Finegoldia magna (strain ATCC 29328 / DSM 20472 / WAL 2508) (Peptostreptococcus magnus).